Here is a 323-residue protein sequence, read N- to C-terminus: Cytosolic sulfotransferase 5 (323 aa).

Position 69 to 74 (69 to 74 (KCGTTW)) interacts with 3'-phosphoadenylyl sulfate. The active-site Proton acceptor is His135. Residues Arg157, Ser165, and 289–291 (RKG) contribute to the 3'-phosphoadenylyl sulfate site.

This sequence belongs to the sulfotransferase 1 family. In terms of tissue distribution, expressed in inflorescence stems, roots and siliques.

The protein localises to the cytoplasm. Functionally, sulfotransferase that utilizes 3'-phospho-5'-adenylyl sulfate (PAPS) as sulfonate donor to specifically catalyze the sulfate conjugation of flavones and flavonols. Strictly specific for the position 7. Substrate preference is kaempferol 3-sulfate &gt; isorhamnetin &gt; kaempferol. The polypeptide is Cytosolic sulfotransferase 5 (SOT5) (Arabidopsis thaliana (Mouse-ear cress)).